The following is a 266-amino-acid chain: NAD kinase 1 (266 aa).

Asp45 functions as the Proton acceptor in the catalytic mechanism. NAD(+) is bound by residues 45 to 46 (DG), 122 to 123 (NE), and Arg148. Asp150 serves as a coordination point for ATP. NAD(+) is bound by residues Ser158 and 161–166 (TAYNKA).

It belongs to the NAD kinase family. Homodimer. Ca(2+) serves as cofactor. Requires Mn(2+) as cofactor.

The protein resides in the cytoplasm. The enzyme catalyses NAD(+) + ATP = ADP + NADP(+) + H(+). With respect to regulation, allosterically inhibited by NADP and activated by quinolinic acid. Strongly inhibited by HgCl(2). In terms of biological role, involved in the regulation of the intracellular balance of NAD and NADP, and is a key enzyme in the biosynthesis of NADP. Catalyzes specifically the phosphorylation on 2'-hydroxyl of the adenosine moiety of NAD to yield NADP. It can use ATP and other nucleoside triphosphates (GTP, UTP) as well as inorganic polyphosphate (poly(P)) as a source of phosphorus. The sequence is that of NAD kinase 1 (ppnKA) from Bacillus subtilis (strain 168).